Reading from the N-terminus, the 465-residue chain is Serine/threonine-protein kinase 38 (465 aa).

At A2 the chain carries N-acetylalanine. The interval 62 to 87 (KRLRRSAHARKETEFLRLKRTRLGLE) is interaction with S100B. T74 carries the post-translational modification Phosphothreonine. The Protein kinase domain maps to 89-382 (FESLKVIGRG…VEEIKNNLFF (294 aa)). Residues 95–103 (IGRGAFGEV) and K118 contribute to the ATP site. D212 (proton acceptor) is an active-site residue. S264 is modified (phosphoserine). Phosphoserine; by autocatalysis is present on S281. Residues 306–311 (WSLGVI) carry the UFM1-interacting motif (UFIM) motif. Residues 383-455 (EGVDWEHIRE…KRFEGLTARG (73 aa)) enclose the AGC-kinase C-terminal domain. Phosphothreonine; by STK24/MST3 is present on T444.

The protein belongs to the protein kinase superfamily. AGC Ser/Thr protein kinase family. As to quaternary structure, homodimeric S100B binds two molecules of STK38. Interacts with MOB1 and MOB2. Interacts with MAP3K1 and MAP3K2 (via the kinase catalytic domain). Forms a tripartite complex with MOBKL1B and STK3/MST2. Interacts with MICAL1; leading to inhibit the protein kinase activity by antagonizing activation by MST1/STK4. Mg(2+) is required as a cofactor. In terms of processing, ISGylated. Phosphorylated by STK3/MST2 and this is enhanced by MOBKL1B. As to expression, expressed at high levels in spleen, lung, thymus, brain and fat tissue.

Its subcellular location is the nucleus. It is found in the cytoplasm. The protein resides in the chromosome. It catalyses the reaction L-seryl-[protein] + ATP = O-phospho-L-seryl-[protein] + ADP + H(+). It carries out the reaction L-threonyl-[protein] + ATP = O-phospho-L-threonyl-[protein] + ADP + H(+). Its activity is regulated as follows. Activated by binding of S100B which releases autoinhibitory N-lobe interactions, enabling ATP to bind and the autophosphorylation of Ser-281. Thr-444 then undergoes calcium-dependent phosphorylation by STK24/MST3. Interactions between phosphorylated Thr-444 and the N-lobe promote additional structural changes that complete the activation of the kinase. Autoinhibition is also released by the binding of MOB1/MOBKL1A and MOB2/HCCA2 to the N-terminal of STK38. Its function is as follows. Serine/threonine-protein kinase that acts as a negative regulator of MAP3K1/2 signaling. Converts MAP3K2 from its phosphorylated form to its non-phosphorylated form and inhibits autophosphorylation of MAP3K2. Acts as an ufmylation 'reader' in a kinase-independent manner: specifically recognizes and binds mono-ufmylated histone H4 in response to DNA damage, promoting the recruitment of SUV39H1 to the double-strand breaks, resulting in ATM activation. This is Serine/threonine-protein kinase 38 from Mus musculus (Mouse).